A 299-amino-acid chain; its full sequence is NAD(+) hydrolase PdTIR (299 aa).

A TIR domain is found at 164-297 (PPHDIFISHA…EIVADLMAII (134 aa)). NAD(+) contacts are provided by residues 173 to 174 (AW) and Arg-203. Glu-239 is a catalytic residue.

As to quaternary structure, homodimer. Interacts with host MYD88.

It catalyses the reaction NAD(+) + H2O = ADP-D-ribose + nicotinamide + H(+). NAD(+) hydrolase (NADase) that catalyzes cleavage of NAD(+) into ADP-D-ribose (ADPR) and nicotinamide. This is NAD(+) hydrolase PdTIR from Paracoccus denitrificans (strain Pd 1222).